A 627-amino-acid chain; its full sequence is Phosphomethylpyrimidine synthase (627 aa).

Substrate is bound by residues N233, M262, Y291, H327, 347–349 (SRG), 388–391 (DGLR), and E427. H431 is a binding site for Zn(2+). Residue Y454 participates in substrate binding. H495 lines the Zn(2+) pocket. C575, C578, and C583 together coordinate [4Fe-4S] cluster.

Belongs to the ThiC family. As to quaternary structure, homodimer. The cofactor is [4Fe-4S] cluster.

It carries out the reaction 5-amino-1-(5-phospho-beta-D-ribosyl)imidazole + S-adenosyl-L-methionine = 4-amino-2-methyl-5-(phosphooxymethyl)pyrimidine + CO + 5'-deoxyadenosine + formate + L-methionine + 3 H(+). It participates in cofactor biosynthesis; thiamine diphosphate biosynthesis. Its function is as follows. Catalyzes the synthesis of the hydroxymethylpyrimidine phosphate (HMP-P) moiety of thiamine from aminoimidazole ribotide (AIR) in a radical S-adenosyl-L-methionine (SAM)-dependent reaction. In Acidithiobacillus ferrooxidans (strain ATCC 23270 / DSM 14882 / CIP 104768 / NCIMB 8455) (Ferrobacillus ferrooxidans (strain ATCC 23270)), this protein is Phosphomethylpyrimidine synthase.